A 143-amino-acid polypeptide reads, in one-letter code: Large ribosomal subunit protein uL11 (143 aa).

Belongs to the universal ribosomal protein uL11 family. In terms of assembly, part of the ribosomal stalk of the 50S ribosomal subunit. Interacts with L10 and the large rRNA to form the base of the stalk. L10 forms an elongated spine to which L12 dimers bind in a sequential fashion forming a multimeric L10(L12)X complex. In terms of processing, one or more lysine residues are methylated.

Functionally, forms part of the ribosomal stalk which helps the ribosome interact with GTP-bound translation factors. The protein is Large ribosomal subunit protein uL11 of Burkholderia ambifaria (strain MC40-6).